The chain runs to 317 residues: Ribosomal large subunit pseudouridine synthase D (317 aa).

The 75-residue stretch at 15–89 folds into the S4 RNA-binding domain; the sequence is WRLDRALASL…IPLEIVFEDE (75 aa). Aspartate 141 is an active-site residue.

Belongs to the pseudouridine synthase RluA family.

It localises to the cytoplasm. The catalysed reaction is uridine(1911/1915/1917) in 23S rRNA = pseudouridine(1911/1915/1917) in 23S rRNA. In terms of biological role, responsible for synthesis of pseudouridine from uracil at positions 1911, 1915 and 1917 in 23S ribosomal RNA. In Zymomonas mobilis subsp. mobilis (strain ATCC 31821 / ZM4 / CP4), this protein is Ribosomal large subunit pseudouridine synthase D.